A 148-amino-acid chain; its full sequence is MSFTYNRTVRFQDTDAAGVVYFANVLGICHEAYEESLEASSINLKDFFTNPSVAFPIVHASVDFLRPMFVGDKLLISLIPQKIGVEKFEITYEVTVAEVVVAKAITRHVCIDASSRSKQELPDEIVQWLETNRRDAEGAERRRSREIM.

Residue aspartate 15 is part of the active site.

The protein belongs to the 4-hydroxybenzoyl-CoA thioesterase family. DHNA-CoA hydrolase subfamily.

The enzyme catalyses 1,4-dihydroxy-2-naphthoyl-CoA + H2O = 1,4-dihydroxy-2-naphthoate + CoA + H(+). It participates in cofactor biosynthesis; phylloquinone biosynthesis. Its pathway is quinol/quinone metabolism; 1,4-dihydroxy-2-naphthoate biosynthesis; 1,4-dihydroxy-2-naphthoate from chorismate: step 7/7. Catalyzes the hydrolysis of 1,4-dihydroxy-2-naphthoyl-CoA (DHNA-CoA) to 1,4-dihydroxy-2-naphthoate (DHNA), a reaction involved in phylloquinone (vitamin K1) biosynthesis. In Nostoc punctiforme (strain ATCC 29133 / PCC 73102), this protein is 1,4-dihydroxy-2-naphthoyl-CoA hydrolase.